The sequence spans 189 residues: MNGLPSAEAPGGAGCALAGLPPLPRGLSGLLNASGGSWRELERVYSQRSRIHDELSRAARAPDGPRHAAGAANAGPAAGPRRPVNLDSALAALRKEMVGLRQLDMSLLCQLWGLYESIQDYKHLCQDLSFCQDLSSSLHSDSSYPPDAGLSDDEEPPDASLPPDPPPLTVPQTHNARDQWLQDAFHISL.

Phosphoserine is present on S28. The segment at 54–83 (ELSRAARAPDGPRHAAGAANAGPAAGPRRP) is disordered. Over residues 67–83 (HAAGAANAGPAAGPRRP) the composition is skewed to low complexity. An LRR repeat occupies 86–114 (LDSALAALRKEMVGLRQLDMSLLCQLWGL). Residues 141-175 (DSSYPPDAGLSDDEEPPDASLPPDPPPLTVPQTHN) form a disordered region. Residues 159–169 (ASLPPDPPPLT) show a composition bias toward pro residues. S188 carries the phosphoserine modification.

Belongs to the FAM89 family. In terms of assembly, interacts with SKI. Interacts (via LRR repeat) with CDC42BPA (via AGC-kinase C-terminal domain), CDC42BPB (via AGC-kinase C-terminal domain) and LIMK1 (via LIM zinc-binding domains). Forms a tripartite complex with CDC42BPA, CDC42BPB and LIMK1.

The protein localises to the cytoplasm. It localises to the cell projection. Its subcellular location is the lamellipodium. In terms of biological role, negatively regulates TGF-beta-induced signaling; in cooperation with SKI prevents the translocation of SMAD2 from the nucleus to the cytoplasm in response to TGF-beta. Acts as an adapter that mediates the specific recognition of LIMK1 by CDC42BPA and CDC42BPB in the lamellipodia. LRAP25-mediated CDC42BPA/CDC42BPB targeting to LIMK1 and the lamellipodium results in LIMK1 activation and the subsequent phosphorylation of CFL1 which is important for lamellipodial F-actin regulation. In Homo sapiens (Human), this protein is Leucine repeat adapter protein 25 (FAM89B).